The sequence spans 179 residues: Large ribosomal subunit protein uL5 (179 aa).

It belongs to the universal ribosomal protein uL5 family. In terms of assembly, part of the 50S ribosomal subunit; part of the 5S rRNA/L5/L18/L25 subcomplex. Contacts the 5S rRNA and the P site tRNA. Forms a bridge to the 30S subunit in the 70S ribosome.

In terms of biological role, this is one of the proteins that bind and probably mediate the attachment of the 5S RNA into the large ribosomal subunit, where it forms part of the central protuberance. In the 70S ribosome it contacts protein S13 of the 30S subunit (bridge B1b), connecting the 2 subunits; this bridge is implicated in subunit movement. Contacts the P site tRNA; the 5S rRNA and some of its associated proteins might help stabilize positioning of ribosome-bound tRNAs. In Pseudomonas putida (strain ATCC 700007 / DSM 6899 / JCM 31910 / BCRC 17059 / LMG 24140 / F1), this protein is Large ribosomal subunit protein uL5.